Here is a 764-residue protein sequence, read N- to C-terminus: Transient receptor potential cation channel subfamily V member 2 (764 aa).

The disordered stretch occupies residues 1–46 (MTSPSSSPVFRLETLDGGQEDGSEADRGKLDFGSGLPPMESQFQGE). Residues 1 to 388 (MTSPSSSPVF…LLQAKWDLLI (388 aa)) form a required for interaction with SLC50A1 region. At 1–390 (MTSPSSSPVF…QAKWDLLIPK (390 aa)) the chain is on the cytoplasmic side. Ser6 carries the phosphoserine modification. 6 ANK repeats span residues 72-114 (NRFD…TEGS), 115-161 (TGKT…DDYY), 162-207 (RGHS…TCFY), 208-243 (FGEL…ATDS), 244-292 (QGNT…IRNL), and 293-319 (QDLT…REFS). A helical membrane pass occupies residues 391-411 (FFLNFLCNLIYMFIFTAVAYH). Over 412 to 434 (QPTLKKQAAPHLKAEVGNSMLLT) the chain is Extracellular. A helical transmembrane segment spans residues 435-455 (GHILILLGGIYLLVGQLWYFW). The Cytoplasmic portion of the chain corresponds to 456–471 (RRHVFIWISFIDSYFE). The helical transmembrane segment at 472-492 (ILFLFQALLTVVSQVLCFLAI) threads the bilayer. Residue Glu493 is a topological domain, extracellular. The helical transmembrane segment at 494-514 (WYLPLLVSALVLGWLNLLYYT) threads the bilayer. At 515-537 (RGFQHTGIYSVMIQKVILRDLLR) the chain is on the cytoplasmic side. A helical transmembrane segment spans residues 538–558 (FLLIYLVFLFGFAVALVSLSQ). The tract at residues 562 to 585 (RPEAPTGPNATESVQPMEGQEDEG) is disordered. Asn570 carries N-linked (GlcNAc...) asparagine glycosylation. Residues 572–609 (TESVQPMEGQEDEGNGAQYRGILEASLELFKFTIGMGE) constitute an intramembrane region (pore-forming). A helical transmembrane segment spans residues 622-642 (VLLLLLAYVLLTYILLLNMLI). The Cytoplasmic segment spans residues 643-764 (ALMSETVNSV…YVPVQLLQSN (122 aa)). The segment at 725–756 (PSGAGVPRTLENPVLASPPKEDEDGASEENYV) is disordered. Phosphoserine is present on residues Ser751 and Ser763.

The protein belongs to the transient receptor (TC 1.A.4) family. TrpV subfamily. TRPV2 sub-subfamily. As to quaternary structure, homotetramer. Interacts with a cAMP-dependent protein kinase type II regulatory subunit (PRKAR2A or PRKAR2B) and ACBD3. Interacts with SLC50A1; the interaction probably occurs intracellularly and depends on TRPV2 N-glycosylation. In terms of processing, N-glycosylated. Post-translationally, phosphorylated by PKA.

It is found in the cell membrane. It localises to the cytoplasm. The protein resides in the melanosome. It carries out the reaction Ca(2+)(in) = Ca(2+)(out). The catalysed reaction is Mg(2+)(in) = Mg(2+)(out). The enzyme catalyses Na(+)(in) = Na(+)(out). It catalyses the reaction K(+)(in) = K(+)(out). Calcium-permeable, non-selective cation channel with an outward rectification. Seems to be regulated, at least in part, by IGF1, PDGF and neuropeptide head activator. May transduce physical stimuli in mast cells. Activated by temperatures higher than 52 degrees Celsius; is not activated by vanilloids and acidic pH. In Homo sapiens (Human), this protein is Transient receptor potential cation channel subfamily V member 2 (TRPV2).